The chain runs to 239 residues: Pimeloyl-[acyl-carrier protein] methyl ester esterase (239 aa).

Residues Trp-20, 77 to 78, and 138 to 142 contribute to the substrate site; these read SM and FISLQ. Catalysis depends on Ser-77, which acts as the Nucleophile. Catalysis depends on residues Asp-192 and His-220. His-220 is a binding site for substrate.

This sequence belongs to the AB hydrolase superfamily. Carboxylesterase BioH family. As to quaternary structure, monomer.

The protein localises to the cytoplasm. It carries out the reaction 6-carboxyhexanoyl-[ACP] methyl ester + H2O = 6-carboxyhexanoyl-[ACP] + methanol + H(+). The protein operates within cofactor biosynthesis; biotin biosynthesis. The physiological role of BioH is to remove the methyl group introduced by BioC when the pimeloyl moiety is complete. It allows to synthesize pimeloyl-ACP via the fatty acid synthetic pathway through the hydrolysis of the ester bonds of pimeloyl-ACP esters. In Legionella pneumophila (strain Corby), this protein is Pimeloyl-[acyl-carrier protein] methyl ester esterase.